The chain runs to 483 residues: Regulatory protein ViaA (483 aa).

Belongs to the ViaA family. Homodimer. Interacts with RavA.

It localises to the cytoplasm. Component of the RavA-ViaA chaperone complex, which may act on the membrane to optimize the function of some of the respiratory chains. ViaA stimulates the ATPase activity of RavA. In Salmonella dublin (strain CT_02021853), this protein is Regulatory protein ViaA.